The sequence spans 715 residues: Fatty acid oxidation complex subunit alpha (715 aa).

The interval 1–190 is enoyl-CoA hydratase; sequence MTTTSAFMLN…KAGLVDDVVP (190 aa). The interval 306–715 is 3-hydroxyacyl-CoA dehydrogenase; that stretch reads GPLNSVGILG…WTNGETDQGN (410 aa).

It in the N-terminal section; belongs to the enoyl-CoA hydratase/isomerase family. The protein in the central section; belongs to the 3-hydroxyacyl-CoA dehydrogenase family. Heterotetramer of two alpha chains (FadJ) and two beta chains (FadI).

The protein resides in the cytoplasm. It carries out the reaction a (3S)-3-hydroxyacyl-CoA = a (2E)-enoyl-CoA + H2O. The enzyme catalyses a 4-saturated-(3S)-3-hydroxyacyl-CoA = a (3E)-enoyl-CoA + H2O. The catalysed reaction is a (3S)-3-hydroxyacyl-CoA + NAD(+) = a 3-oxoacyl-CoA + NADH + H(+). It catalyses the reaction (3S)-3-hydroxybutanoyl-CoA = (3R)-3-hydroxybutanoyl-CoA. Its pathway is lipid metabolism; fatty acid beta-oxidation. Its function is as follows. Catalyzes the formation of a hydroxyacyl-CoA by addition of water on enoyl-CoA. Also exhibits 3-hydroxyacyl-CoA epimerase and 3-hydroxyacyl-CoA dehydrogenase activities. This is Fatty acid oxidation complex subunit alpha from Salmonella dublin (strain CT_02021853).